Here is a 204-residue protein sequence, read N- to C-terminus: Ribonuclease HII (204 aa).

In terms of domain architecture, RNase H type-2 spans 16-204; sequence ESIAGCDEVG…RRSFLKKILK (189 aa). 3 residues coordinate a divalent metal cation: Asp22, Glu23, and Asp120.

The protein belongs to the RNase HII family. The cofactor is Mn(2+). Mg(2+) serves as cofactor.

The protein localises to the cytoplasm. It carries out the reaction Endonucleolytic cleavage to 5'-phosphomonoester.. Functionally, endonuclease that specifically degrades the RNA of RNA-DNA hybrids. This Alkaliphilus metalliredigens (strain QYMF) protein is Ribonuclease HII.